Here is a 666-residue protein sequence, read N- to C-terminus: Asperfuranone cluster transcription factor afoA (666 aa).

The segment at residues 16–43 (CEECRRRKARCDRVRPKCGFCTENELQC) is a DNA-binding region (zn(2)-C6 fungal-type). Disordered stretches follow at residues 184–206 (LSFD…STTR) and 347–373 (AGSD…GENA). Over residues 353–369 (LSPPSSSPPSSLTLSPS) the composition is skewed to low complexity.

The protein localises to the nucleus. Transcription factor that regulates the expression of the gene cluster that mediates the biosynthesis of asperfuranone, a probable antitumor agent. This Emericella nidulans (strain FGSC A4 / ATCC 38163 / CBS 112.46 / NRRL 194 / M139) (Aspergillus nidulans) protein is Asperfuranone cluster transcription factor afoA.